A 324-amino-acid polypeptide reads, in one-letter code: R2-like ligand binding oxidase (324 aa).

Residues E79, E112, and H115 each coordinate Mn(2+). A cross-link (3-(O4'-tyrosyl)-valine (Val-Tyr)) is located at residues 82–173; it reads VTEDIQPFMK…VNQVRASVTY (92 aa). Fe cation is bound at residue E112. Residues E178, E213, and H216 each coordinate Fe cation. The segment at 304 to 324 is disordered; the sequence is PEALEEKFGEEDAKAMSEAAG. Basic and acidic residues predominate over residues 307-318; it reads LEEKFGEEDAKA.

It belongs to the ribonucleoside diphosphate reductase small chain family. R2-like ligand binding oxidase subfamily. In terms of assembly, homodimer. Requires Fe cation as cofactor. The cofactor is Mn(2+).

Its function is as follows. Probable oxidase. The protein is R2-like ligand binding oxidase of Rhodococcus jostii (strain RHA1).